The primary structure comprises 561 residues: MKSPAPSRPQKMALIPACIFLCFAALSVQAEETPVTPQPPDILLGPLFNDVQNAKLFPDQKTFADAVPNSDPLMIRMQQNQSGFDLRHFVNVNFTLPKEGEKYVPPEGQSLREHIDGLWPVLTRSTENTEKWDSLLPLPEPYVVPGGRFREVYYWDSYFTMLGLAESGHWDKVADMVANFAHEIDTYGHIPNGNRSYYLSRSQPPFFALMVELLAQHEGDAALKQYLPQMQKEYAYWMDGVENLQAGQQEKRVVKLQDGTLLNRYWDDRDTPRPESWVEDIATAKSNPNRPATEIYRDLRSAAASGWDFSSRWMDNPQQLNTLRTTSIVPVDLNSLMFKMEKILARASKAAGDNAMANQYETLANARQKGIEKYLWNDQQGWYADYDLKSHKVRNQLTAAALFPLYVNAAAKDRANKMATATKTHLLQPGGLNTTSVKSGQQWDAPNGWAPLQWVATEGLQNYGQKEVAMDISWHFLTNVQHTYDREKKLVEKYDVSTTGTGGGGGEYPLQDGFGWTNGVTLKMLDLICPKEQPCDNVPATRPLSESTTQPVKQKEAEPTP.

A signal peptide spans 1-30 (MKSPAPSRPQKMALIPACIFLCFAALSVQA). Substrate is bound by residues arginine 148, 155 to 156 (WD), asparagine 192, 201 to 203 (RSQ), 273 to 275 (RPE), and glycine 306. Catalysis depends on proton donor/acceptor residues aspartate 308 and glutamate 492. Position 507 (glutamate 507) interacts with substrate. Residues 535–561 (CDNVPATRPLSESTTQPVKQKEAEPTP) are disordered.

The protein belongs to the glycosyl hydrolase 37 family. In terms of assembly, monomer.

The protein resides in the periplasm. It catalyses the reaction alpha,alpha-trehalose + H2O = alpha-D-glucose + beta-D-glucose. In terms of biological role, provides the cells with the ability to utilize trehalose at high osmolarity by splitting it into glucose molecules that can subsequently be taken up by the phosphotransferase-mediated uptake system. The chain is Putative periplasmic trehalase from Escherichia coli O157:H7.